A 116-amino-acid chain; its full sequence is M-zodatoxin-Lt6a/c (116 aa).

An N-terminal signal peptide occupies residues methionine 1–threonine 22. 2 consecutive propeptides follow at residues valine 23–arginine 44 and glutamate 80–arginine 83. Short sequence motifs (processing quadruplet motif) lie at residues aspartate 41–arginine 44 and glutamate 80–arginine 83. Pyrrolidone carboxylic acid is present on glutamine 84.

Belongs to the cationic peptide 03 (latarcin) family. 06 subfamily. Cleavage of the propeptide depends on the processing quadruplet motif (XXXR, with at least one of X being E). As to expression, expressed by the venom gland.

Its subcellular location is the secreted. In terms of biological role, does not have antimicrobial activity against Gram-positive bacteria (A.globiformis VKM Ac-1112 (MIC&gt;70 uM) and B.subtilis VKM B-501 (MIC&gt;70 uM)), Gram-negative bacteria (E.coli DH5-alpha (MIC&gt;70 uM), E.coli MH1 (MIC&gt;70 uM) and P.aeruginosa PAO1 (MIC&gt;70 uM)), yeast (P.pastoris GS115 (MIC&gt;70 uM) or S.cerevisiae Y190 (MIC&gt;70 uM)). Does not have hemolytic activity against rabbit erythrocytes. However, it causes some conductance changes in planar bilayer membranes, without membrane rupture, suggesting a cytolytic function on other biological targets. It causes paralysis, but is not lethal when injected into insect larvae. The polypeptide is M-zodatoxin-Lt6a/c (Lachesana tarabaevi (Spider)).